A 1036-amino-acid polypeptide reads, in one-letter code: Cysteine-rich motor neuron 1 protein (1036 aa).

The signal sequence occupies residues 1–34 (MYLVAGDRGLAGCGHLLVSLLGLLLLLARSGTRA). The IGFBP N-terminal domain maps to 35–112 (LVCLPCDESK…EYEAGVCEDE (78 aa)). The Extracellular segment spans residues 35-939 (LVCLPCDESK…HPSEDSSLDS (905 aa)). 4 cysteine pairs are disulfide-bonded: Cys-37–Cys-60, Cys-40–Cys-62, Cys-45–Cys-63, and Cys-51–Cys-66. Asn-71 carries an N-linked (GlcNAc...) asparagine glycan. Disulfide bonds link Cys-74-Cys-90 and Cys-84-Cys-109. Asn-113 carries N-linked (GlcNAc...) asparagine glycosylation. Residues 314 to 316 (RGD) carry the Cell attachment site motif. An N-linked (GlcNAc...) asparagine glycan is attached at Asn-330. VWFC domains follow at residues 334-391 (PACV…PVCE) and 401-457 (AGCY…PVCE). Antistasin-like domains lie at 469-498 (CGELSNCTLTGKDCINGFKRDHNGCRTCQC), 505-532 (CSERKQGCTLNCPFGFLTDAQNCEICEC), 539-564 (CRPIICDKYCPLGLLKNKHGCDICRC), and 567-592 (CPELSCSKICPLGFQQDSHGCLICKC). Asn-474 carries N-linked (GlcNAc...) asparagine glycosylation. 2 VWFC domains span residues 606–663 (GTCL…PSCA) and 677–735 (SICH…PQCT). Asn-746 carries N-linked (GlcNAc...) asparagine glycosylation. 2 consecutive VWFC domains span residues 751–809 (NYCK…PYCI) and 817–874 (VVCH…PMCP). The chain crosses the membrane as a helical span at residues 940 to 960 (IASVVVPIIICLSIIIAFLFI). Over 961–1036 (NQKKQWIPLL…LQADNFYQTV (76 aa)) the chain is Cytoplasmic. At Thr-1035 the chain carries Phosphothreonine.

In terms of assembly, interacts with BMP4 and BMP7. In terms of processing, N-glycosylated. In terms of tissue distribution, expressed in pancreas, kidney, skeletal muscle, lung, placenta, brain, heart, spleen, liver and small intestine. Expressed in blood vessels (at protein level).

Its subcellular location is the secreted. The protein resides in the cell membrane. Its function is as follows. May play a role in CNS development by interacting with growth factors implicated in motor neuron differentiation and survival. May play a role in capillary formation and maintenance during angiogenesis. Modulates BMP activity by affecting its processing and delivery to the cell surface. The sequence is that of Cysteine-rich motor neuron 1 protein (CRIM1) from Homo sapiens (Human).